A 149-amino-acid polypeptide reads, in one-letter code: Nucleoside diphosphate kinase (149 aa).

Residues lysine 9, phenylalanine 57, arginine 85, threonine 91, arginine 102, and asparagine 112 each coordinate ATP. Histidine 115 acts as the Pros-phosphohistidine intermediate in catalysis.

This sequence belongs to the NDK family. Homotetramer. Mg(2+) serves as cofactor.

It localises to the cytoplasm. The enzyme catalyses a 2'-deoxyribonucleoside 5'-diphosphate + ATP = a 2'-deoxyribonucleoside 5'-triphosphate + ADP. It catalyses the reaction a ribonucleoside 5'-diphosphate + ATP = a ribonucleoside 5'-triphosphate + ADP. In terms of biological role, major role in the synthesis of nucleoside triphosphates other than ATP. The ATP gamma phosphate is transferred to the NDP beta phosphate via a ping-pong mechanism, using a phosphorylated active-site intermediate. The sequence is that of Nucleoside diphosphate kinase from Trichodesmium erythraeum (strain IMS101).